The following is a 257-amino-acid chain: Imidazole glycerol phosphate synthase subunit HisF (257 aa).

Active-site residues include Asp-12 and Asp-131.

This sequence belongs to the HisA/HisF family. As to quaternary structure, heterodimer of HisH and HisF.

The protein resides in the cytoplasm. It carries out the reaction 5-[(5-phospho-1-deoxy-D-ribulos-1-ylimino)methylamino]-1-(5-phospho-beta-D-ribosyl)imidazole-4-carboxamide + L-glutamine = D-erythro-1-(imidazol-4-yl)glycerol 3-phosphate + 5-amino-1-(5-phospho-beta-D-ribosyl)imidazole-4-carboxamide + L-glutamate + H(+). It functions in the pathway amino-acid biosynthesis; L-histidine biosynthesis; L-histidine from 5-phospho-alpha-D-ribose 1-diphosphate: step 5/9. Its function is as follows. IGPS catalyzes the conversion of PRFAR and glutamine to IGP, AICAR and glutamate. The HisF subunit catalyzes the cyclization activity that produces IGP and AICAR from PRFAR using the ammonia provided by the HisH subunit. The sequence is that of Imidazole glycerol phosphate synthase subunit HisF from Nocardia farcinica (strain IFM 10152).